We begin with the raw amino-acid sequence, 57 residues long: Large ribosomal subunit protein uL30 (57 aa).

It belongs to the universal ribosomal protein uL30 family. As to quaternary structure, part of the 50S ribosomal subunit.

In Buchnera aphidicola subsp. Cinara cedri (strain Cc), this protein is Large ribosomal subunit protein uL30.